The sequence spans 179 residues: GTP-dependent dephospho-CoA kinase (179 aa).

Positions 43, 45, 62, 120, and 143 each coordinate GTP.

Belongs to the GTP-dependent DPCK family.

The catalysed reaction is 3'-dephospho-CoA + GTP = GDP + CoA + H(+). The protein operates within cofactor biosynthesis; coenzyme A biosynthesis. In terms of biological role, catalyzes the GTP-dependent phosphorylation of the 3'-hydroxyl group of dephosphocoenzyme A to form coenzyme A (CoA). This chain is GTP-dependent dephospho-CoA kinase, found in Haloarcula marismortui (strain ATCC 43049 / DSM 3752 / JCM 8966 / VKM B-1809) (Halobacterium marismortui).